Reading from the N-terminus, the 181-residue chain is Probable pyruvoyl-dependent arginine decarboxylase (181 aa).

At Ser-43 the chain carries Pyruvic acid (Ser).

It belongs to the PdaD family. It depends on pyruvate as a cofactor.

The catalysed reaction is L-arginine + H(+) = agmatine + CO2. The sequence is that of Probable pyruvoyl-dependent arginine decarboxylase from Chlorobaculum tepidum (strain ATCC 49652 / DSM 12025 / NBRC 103806 / TLS) (Chlorobium tepidum).